The chain runs to 279 residues: Large ribosomal subunit protein uL2 (279 aa).

A disordered region spans residues 223 to 279 (VVMNPVDHPHGGGEGRTSGGRHPVSPWGQPTKGYKTRRSARPSDKFIVQKRKRNRNR). The segment covering 270-279 (VQKRKRNRNR) has biased composition (basic residues).

Belongs to the universal ribosomal protein uL2 family. Part of the 50S ribosomal subunit. Forms a bridge to the 30S subunit in the 70S ribosome.

Its function is as follows. One of the primary rRNA binding proteins. Required for association of the 30S and 50S subunits to form the 70S ribosome, for tRNA binding and peptide bond formation. It has been suggested to have peptidyltransferase activity; this is somewhat controversial. Makes several contacts with the 16S rRNA in the 70S ribosome. This is Large ribosomal subunit protein uL2 from Leptospira borgpetersenii serovar Hardjo-bovis (strain JB197).